Here is a 157-residue protein sequence, read N- to C-terminus: Homeobox protein DBX2 (157 aa).

The segment at residues 9-68 (GILRRAVFSEDQRKALEKMFQKQKYISKTDRKKLAINLGLKESQVKIWFQNRRMKWRNSK) is a DNA-binding region (homeobox). The interval 105–157 (SQEQTSPRWKEKSPGNSERLTSTQPPPRANSSQSPLYLYPDHDTANKAVTSSD) is disordered. The segment covering 118-139 (PGNSERLTSTQPPPRANSSQSP) has biased composition (polar residues).

This sequence belongs to the H2.0 homeobox family. In terms of tissue distribution, localized to the central nervous system during embryogenesis. It is found restricted to the rostro-caudal and dorso-ventral regions of the hindbrain. In the ventricular zone of the spinal cord, it localizes to the dorsal part of the basal plate. In the adult, it is detected in ovary.

The protein resides in the nucleus. In terms of biological role, appears to perform a very early function in establishing the identity of a subset of cells that originate in the region of the ventricular zone in the developing spinal cord and in the hindbrain. This Gallus gallus (Chicken) protein is Homeobox protein DBX2 (DBX2).